The primary structure comprises 364 residues: DNA replication and repair protein RecF (364 aa).

Position 30-37 (30-37 (GENAQGKT)) interacts with ATP.

It belongs to the RecF family.

The protein resides in the cytoplasm. In terms of biological role, the RecF protein is involved in DNA metabolism; it is required for DNA replication and normal SOS inducibility. RecF binds preferentially to single-stranded, linear DNA. It also seems to bind ATP. The protein is DNA replication and repair protein RecF of Streptococcus suis (strain 98HAH33).